An 86-amino-acid chain; its full sequence is Large ribosomal subunit protein uL23 (86 aa).

The protein belongs to the universal ribosomal protein uL23 family. As to quaternary structure, part of the 50S ribosomal subunit. Contacts protein L29.

Binds to 23S rRNA. One of the proteins that surrounds the polypeptide exit tunnel on the outside of the ribosome. The chain is Large ribosomal subunit protein uL23 from Methanococcus maripaludis (strain C5 / ATCC BAA-1333).